Reading from the N-terminus, the 86-residue chain is Beta-mammal/insect toxin To1 (86 aa).

The N-terminal stretch at 1–20 (MTRFVLFISCFFLIDMIVEC) is a signal peptide. The 63-residue stretch at 22 to 84 (KEGYLVGNDG…TWSSATNKCK (63 aa)) folds into the LCN-type CS-alpha/beta domain. 4 cysteine pairs are disulfide-bonded: Cys32–Cys83, Cys36–Cys58, Cys44–Cys64, and Cys48–Cys66. At Lys84 the chain carries Lysine amide.

This sequence belongs to the long (4 C-C) scorpion toxin superfamily. Sodium channel inhibitor family. Beta subfamily. Expressed by the venom gland.

The protein resides in the secreted. Functionally, beta toxin that show multiple effects. It enhances the open probability at more negative potentials of human Nav1.3/SCN3A and Nav1.6/SCN8A, of the insect channel BgNaV1 and of arachnid VdNaV1 channel. It promotes an important shift in slow inactivation processes as a function of the prepulse voltage in human Nav1.3/SCN3A and Nav1.6/SCN8A and a small shift in Nav1.1/SCN1A, Nav1.2/SCN2A and Nav1.4/SCN4A. Finally, it reduces the peak of sodium currents in Nav1.3/SCN3A (80% inhibition at 70 nM of toxin), Nav1.6/SCN8A (55.3%), Nav1.1/SCN1A (53.3%), Nav1.5/SCN5A (46.7%), Nav1.2/SCN2A (42.7%) and Nav1.4/SCN4A (20%) voltage-gated sodium channels. It has also been shown to affect the sodium current permeability of rat cerebellum granular cells in a partially reversible manner. In vivo, an intraperitoneal injection (20 ug) into mice produces excitability, respiratory problems, convulsions and death, within the first 30 minutes after injection. In Tityus obscurus (Amazonian scorpion), this protein is Beta-mammal/insect toxin To1.